Consider the following 125-residue polypeptide: Small ribosomal subunit protein uS13 (125 aa).

Residues 93-125 are disordered; the sequence is RSLPVRGQRTRTNARTRKGKRKTVAGKKKAGKK.

The protein belongs to the universal ribosomal protein uS13 family. Part of the 30S ribosomal subunit. Forms a loose heterodimer with protein S19. Forms two bridges to the 50S subunit in the 70S ribosome.

In terms of biological role, located at the top of the head of the 30S subunit, it contacts several helices of the 16S rRNA. In the 70S ribosome it contacts the 23S rRNA (bridge B1a) and protein L5 of the 50S subunit (bridge B1b), connecting the 2 subunits; these bridges are implicated in subunit movement. Contacts the tRNAs in the A and P-sites. This is Small ribosomal subunit protein uS13 from Chlorobaculum tepidum (strain ATCC 49652 / DSM 12025 / NBRC 103806 / TLS) (Chlorobium tepidum).